The primary structure comprises 544 residues: Secreted aspartic protease 9 (544 aa).

The N-terminal stretch at 1-17 is a signal peptide; it reads MRLNSVALLSLVATALA. Positions 31–50 are disordered; the sequence is GESKDDLSPEDDSNPRFVKR. A Peptidase A1 domain is found at 65-479; the sequence is YMATLKIGSN…DLDDYEVSLA (415 aa). 83–85 contributes to the pepstatin A binding site; sequence DTG. Cysteines 98 and 195 form a disulfide. The active site involves Thr-167. Asn-212, Asn-240, and Asn-252 each carry an N-linked (GlcNAc...) asparagine glycan. The active site involves Asp-371. Pepstatin A is bound at residue 371-375; the sequence is DTGST. Cysteines 406 and 441 form a disulfide. N-linked (GlcNAc...) asparagine glycans are attached at residues Asn-422 and Asn-499. The disordered stretch occupies residues 500–520; sequence SSGSGTTSSSGTSTSTSTRHS.

This sequence belongs to the peptidase A1 family. As to quaternary structure, monomer. The GPI-anchor is attached to the protein in the endoplasmic reticulum and serves to target the protein to the cell surface. There, the glucosamine-inositol phospholipid moiety is cleaved off and the GPI-modified mannoprotein is covalently attached via its lipidless GPI glycan remnant to the 1,6-beta-glucan of the outer cell wall layer.

It is found in the cell membrane. The protein resides in the secreted. It localises to the cell wall. It carries out the reaction Preferential cleavage at the carboxyl of hydrophobic amino acids, but fails to cleave 15-Leu-|-Tyr-16, 16-Tyr-|-Leu-17 and 24-Phe-|-Phe-25 of insulin B chain. Activates trypsinogen, and degrades keratin.. In terms of biological role, secreted aspartic peptidases (SAPs) are a group of ten acidic hydrolases considered as key virulence factors. These enzymes supply the fungus with nutrient amino acids as well as are able to degrade the selected host's proteins involved in the immune defense. Moreover, acts toward human hemoglobin though limited proteolysis to generate a variety of antimicrobial hemocidins, enabling to compete with the other microorganisms of the same physiological niche using the microbicidal peptides generated from the host protein. Functionally, plays a key role in defense against host by cleaving histatin-5 (Hst 5), a peptide from human saliva that carries out fungicidal activity. The cleavage rate decreases in an order of SAP2 &gt; SAP9 &gt; SAP3 &gt; SAP7 &gt; SAP4 &gt; SAP1 &gt; SAP8. The first cleavage occurs between residues 'Lys-17' and 'His-18' of Hst 5, giving DSHAKRHHGYKRKFHEK and HHSHRGY peptides. Simultaneously, the DSHAKRHHGYKRK peptide is also formed. Further fragmentation by SAP9 results in FHEK product. This is Secreted aspartic protease 9 from Candida albicans (Yeast).